Reading from the N-terminus, the 468-residue chain is Secretogranin-3 (468 aa).

The signal sequence occupies residues 1 to 19 (MGFLGTGTWILVLVLPIQA). The disordered stretch occupies residues 23-69 (PGGSQDKSLHNRELSAERPLNEQIAEAEEDKIKKTYPPENKPGQSNY). Residues 29-42 (KSLHNRELSAERPL) show a composition bias toward basic and acidic residues. Ser37 bears the Phosphoserine mark. O-linked (Xyl...) (chondroitin sulfate) serine glycosylation is present at Ser37. Thr216 and Thr231 each carry an O-linked (GalNAc...) threonine glycan. The tract at residues 353–406 (KLFPAPSEKSHEETDSTKEEAAKMEKEYGSLKDSTKDDNSNPGGKTDEPKGKTE) is disordered. Residue Ser359 is glycosylated (O-linked (GalNAc...) serine). A compositionally biased stretch (basic and acidic residues) spans 360 to 406 (EKSHEETDSTKEEAAKMEKEYGSLKDSTKDDNSNPGGKTDEPKGKTE). Ser362 is modified (phosphoserine).

As to quaternary structure, interacts with CHGA. Interacts with secretogranin II/SCG2. Interacts (via C-terminus) with CPE. Post-translationally, O-glycosylated. As to expression, detected in urine (at protein level). Expressed in brain, heart, kidney, liver and skeletal muscle.

It is found in the cytoplasmic vesicle. Its subcellular location is the secretory vesicle. The protein localises to the secretory vesicle membrane. It localises to the secreted. Functionally, member of the granin protein family that regulates the biogenesis of secretory granules. Acts as a sorting receptor for intragranular proteins including chromogranin A/CHGA. May also play a role in angiogenesis. Promotes endothelial proliferation, migration and tube formation through MEK/ERK signaling pathway. The polypeptide is Secretogranin-3 (SCG3) (Homo sapiens (Human)).